Reading from the N-terminus, the 84-residue chain is Large ribosomal subunit protein bL27 (84 aa).

It belongs to the bacterial ribosomal protein bL27 family.

This Buchnera aphidicola subsp. Acyrthosiphon pisum (strain Tuc7) protein is Large ribosomal subunit protein bL27.